Consider the following 131-residue polypeptide: MMNDIIADGLTRIRNAAMRGLEVTQLNHSKLMEAVLKVFEDKGYIESFKVVEDGNKKFINVTLKYDENGNSVINEVKKVSKPGRRVYKGYEDIKRFKNGYGTLVVSTNKGVLPNDEAYKLKVGGEVICSIW.

Belongs to the universal ribosomal protein uS8 family. In terms of assembly, part of the 30S ribosomal subunit. Contacts proteins S5 and S12.

In terms of biological role, one of the primary rRNA binding proteins, it binds directly to 16S rRNA central domain where it helps coordinate assembly of the platform of the 30S subunit. In Nautilia profundicola (strain ATCC BAA-1463 / DSM 18972 / AmH), this protein is Small ribosomal subunit protein uS8.